We begin with the raw amino-acid sequence, 444 residues long: UDP-N-acetylmuramoylalanine--D-glutamate ligase (444 aa).

An ATP-binding site is contributed by 109 to 115 (GSNGKTT).

Belongs to the MurCDEF family.

The protein localises to the cytoplasm. It carries out the reaction UDP-N-acetyl-alpha-D-muramoyl-L-alanine + D-glutamate + ATP = UDP-N-acetyl-alpha-D-muramoyl-L-alanyl-D-glutamate + ADP + phosphate + H(+). The protein operates within cell wall biogenesis; peptidoglycan biosynthesis. In terms of biological role, cell wall formation. Catalyzes the addition of glutamate to the nucleotide precursor UDP-N-acetylmuramoyl-L-alanine (UMA). This chain is UDP-N-acetylmuramoylalanine--D-glutamate ligase, found in Bacteroides fragilis (strain ATCC 25285 / DSM 2151 / CCUG 4856 / JCM 11019 / LMG 10263 / NCTC 9343 / Onslow / VPI 2553 / EN-2).